The primary structure comprises 418 residues: Glutamyl-tRNA reductase (418 aa).

Substrate contacts are provided by residues 49-52 (TCNR), Ser109, 114-116 (EPQ), and Gln120. The Nucleophile role is filled by Cys50. 189–194 (GAGETI) serves as a coordination point for NADP(+).

It belongs to the glutamyl-tRNA reductase family. Homodimer.

The catalysed reaction is (S)-4-amino-5-oxopentanoate + tRNA(Glu) + NADP(+) = L-glutamyl-tRNA(Glu) + NADPH + H(+). It functions in the pathway porphyrin-containing compound metabolism; protoporphyrin-IX biosynthesis; 5-aminolevulinate from L-glutamyl-tRNA(Glu): step 1/2. Catalyzes the NADPH-dependent reduction of glutamyl-tRNA(Glu) to glutamate 1-semialdehyde (GSA). This chain is Glutamyl-tRNA reductase, found in Escherichia coli O6:K15:H31 (strain 536 / UPEC).